The chain runs to 284 residues: Xyloglucan endotransglucosylase/hydrolase protein 22 (284 aa).

Positions 1–21 (MAITYLLPLFLSLIITSSVSA) are cleaved as a signal peptide. Residues 22-211 (NFQRDVEITW…WSKAPFTASY (190 aa)) form the GH16 domain. Residue E97 is the Nucleophile of the active site. The active-site Proton donor is the E101. A xyloglucan-binding site is contributed by E101. N-linked (GlcNAc...) asparagine glycosylation occurs at N105. Xyloglucan-binding positions include 114-116 (HTN), 124-126 (DKE), 190-191 (DW), and G195. C219 and C228 are joined by a disulfide. N-linked (GlcNAc...) asparagine glycosylation is present at N230. Residues C267 and C281 are joined by a disulfide bond. R272 serves as a coordination point for xyloglucan.

Belongs to the glycosyl hydrolase 16 family. XTH group 2 subfamily. In terms of processing, contains at least one intrachain disulfide bond essential for its enzymatic activity. N-glycosylated; essential for its enzymatic activity. Highly expressed. Predominantly expressed in green siliques. Expressed in young expanding leaves, trichomes, lateral root primordia, vascular tissue, abscission zones and elongating hypocols. Following wind stimulation, it decreases in the leaves of wind-stimulated plants, while it strongly increases in sites around cells of the pith parenchyma, between the vascular elements, and within the epidermis.

Its subcellular location is the secreted. The protein localises to the cell wall. It localises to the extracellular space. The protein resides in the apoplast. The catalysed reaction is breaks a beta-(1-&gt;4) bond in the backbone of a xyloglucan and transfers the xyloglucanyl segment on to O-4 of the non-reducing terminal glucose residue of an acceptor, which can be a xyloglucan or an oligosaccharide of xyloglucan.. Functionally, catalyzes xyloglucan endohydrolysis (XEH) and/or endotransglycosylation (XET). Cleaves and religates xyloglucan polymers, an essential constituent of the primary cell wall, and thereby participates in cell wall construction of growing tissues. Its induction in case of mechanical stress, suggests that it may contribute in the adaptive changes in morphogenesis by being recruited to alter tissues tensil strength, or flexibility, enabling adaptation to mechanically stressful environments. The polypeptide is Xyloglucan endotransglucosylase/hydrolase protein 22 (XTH22) (Arabidopsis thaliana (Mouse-ear cress)).